A 439-amino-acid polypeptide reads, in one-letter code: 23S rRNA (uracil(1939)-C(5))-methyltransferase RlmD (439 aa).

A TRAM domain is found at 10–69 (KTQLNTRHQAVQVERLDHHGAGIAYLKKKPLFIDGALPGEEVVTQLVEEKSKFARGKLIK). Residues Cys-82, Cys-88, Cys-91, and Cys-169 each contribute to the [4Fe-4S] cluster site. S-adenosyl-L-methionine-binding residues include Gln-272, Phe-301, Asn-306, Glu-322, Asn-349, and Asp-370. The Nucleophile role is filled by Cys-396.

The protein belongs to the class I-like SAM-binding methyltransferase superfamily. RNA M5U methyltransferase family. RlmD subfamily.

It carries out the reaction uridine(1939) in 23S rRNA + S-adenosyl-L-methionine = 5-methyluridine(1939) in 23S rRNA + S-adenosyl-L-homocysteine + H(+). In terms of biological role, catalyzes the formation of 5-methyl-uridine at position 1939 (m5U1939) in 23S rRNA. The protein is 23S rRNA (uracil(1939)-C(5))-methyltransferase RlmD of Vibrio parahaemolyticus serotype O3:K6 (strain RIMD 2210633).